The chain runs to 190 residues: Guanylate kinase (190 aa).

The region spanning 3-185 (NYIFIVSAPS…SLEQFCKYFE (183 aa)) is the Guanylate kinase-like domain. 10 to 17 (APSGAGKS) is an ATP binding site.

The protein belongs to the guanylate kinase family.

It is found in the cytoplasm. It carries out the reaction GMP + ATP = GDP + ADP. Its function is as follows. Essential for recycling GMP and indirectly, cGMP. The protein is Guanylate kinase of Francisella tularensis subsp. tularensis (strain FSC 198).